A 415-amino-acid polypeptide reads, in one-letter code: Gamma-glutamyl phosphate reductase (415 aa).

It belongs to the gamma-glutamyl phosphate reductase family.

The protein localises to the cytoplasm. The enzyme catalyses L-glutamate 5-semialdehyde + phosphate + NADP(+) = L-glutamyl 5-phosphate + NADPH + H(+). Its pathway is amino-acid biosynthesis; L-proline biosynthesis; L-glutamate 5-semialdehyde from L-glutamate: step 2/2. Its function is as follows. Catalyzes the NADPH-dependent reduction of L-glutamate 5-phosphate into L-glutamate 5-semialdehyde and phosphate. The product spontaneously undergoes cyclization to form 1-pyrroline-5-carboxylate. The polypeptide is Gamma-glutamyl phosphate reductase (Lachnospira eligens (strain ATCC 27750 / DSM 3376 / VPI C15-48 / C15-B4) (Eubacterium eligens)).